The primary structure comprises 493 residues: Cytochrome P450 monooxygenase esdpG (493 aa).

The chain crosses the membrane as a helical span at residues 10–30 (VLGVTWLSALFTLGSLSVFWL). C434 is a binding site for heme.

The protein belongs to the cytochrome P450 family. Heme is required as a cofactor.

It localises to the membrane. Its pathway is secondary metabolite biosynthesis; terpenoid biosynthesis. In terms of biological role, cytochrome P450 monooxygenasee; part of the cluster that mediates the biosynthesis of shearones, diterpenoid pyrones (DPs) which are structurally diverse meroterpenoids consisting of a diterpene linked by a pyrone, and which may exhibit a range of bioactivities. Whitin the pathway, esdpG takes part in the molecular scaffold modification via the hydroxylation at C-11 and C-12 and can transform shearone A into shearone C and shearone B into shearone D. The molecular scaffold is commonly biosynthesized by a series of enzymes including the non-reducing polyketide synthase (NR-PKS) esdpA that generates an alpha-pyrone; the prenyltransferase esdpC that attaches a geranylgeranyl pyrophosphate (GGPP) produced by the GGPP synthase (GGPPS) esdpD onto the pyrone unit; the FAD-dependent monooxygenase esdpE that converts an olefin on the diterpene unit into an epoxide; and the terpene cyclase esdpB that catalyzes the cyclization reactions to give the molecular backbone shearone A. In the modification steps, esdpF oxidizes the hydroxy group to a ketone at C-3 and esdpG then attaches hydroxy groups at both C-11 and C-12. After that, esdpI hydroxylates at C-20 and esdpH hydroxylates at C-6'. The ether bridge is generated by nucleophilic attack of the hydroxy group at C-20 to the carbonyl carbon at C-3. EsdpH can also functions prior to esdpI. The different combinations of these modification enzymes lead to the production of diverse shearone derivatives, shearone I being the end product of the pathway. The alpha-ketoglutarate-dependent dioxygenase esdpJ seems not to be involved in this pathway. In Penicillium shearii (Eupenicillium shearii), this protein is Cytochrome P450 monooxygenase esdpG.